A 643-amino-acid chain; its full sequence is MILEERPDGQGTGEESSRPQDDGSIRKGYGSFVQNQPGQLQSHRARLHQQISKELRMRTGAENLYRATSNTWVRETVALELSYVNSNLQLLKEELAELSTSVDVDQPEGEGITIPMIPLGLKETKELDWATPLKELISEHFGEDGTSFETEIQELEDLRQATRTPSRDEAGLDLLAAYYSQLCFLDARFFSPSRSPGLLFHWYDSLTGVPAQQRALAFEKGSVLFNIGALHTQIGARQDCSCTEGTNHAAEAFQRAAGAFRLLRENFSHAPSPDMSAASLSMLEQLMIAQAQECIFKGLLLPASATPDICPDQLQLAQEAAQVATEYGLVHRAMAQPPVRDYLPASWTNLAHVKAEHFCALAHYHAAMALCESHPAKGELARQEHVFQPSTPHEPLGPTLPQHPEDRRKLAKAHLKRAILGQEEALRLHTLCRVLRKVDLLQVVVTQALRRSLAKYSQLEREDDFFEATEAPDIQPKTHQTPEGPLSVFSTKNRWQLVGPVHMTRGEGSFGFTLRGDSPVLIAAVVPGGQAESAGLKEGDYIVSVNGQPCKWWKHLEVVTQLRSMGEEGVSLQVVSLLPSPEPRGTGPRRAALLWNQRECGFETPMPTRTRPWPILGWSRKNKQGKTGSHPDPCTNRNCVTCP.

The interval Met1–His43 is disordered. The segment covering Glu15–Ile25 has biased composition (basic and acidic residues). The region spanning Gly30–Val104 is the REM-1 domain. The residue at position 31 (Ser31) is a Phosphoserine. Polar residues predominate over residues Phe32 to Ser42. The BRO1 domain occupies Pro115–Glu462. In terms of domain architecture, PDZ spans Pro500 to Leu577.

The protein belongs to the RHPN family. In terms of assembly, binds specifically to GTP-Rho. Interacts with ROPN1. As to expression, highly expressed in testis.

Has no enzymatic activity. May serve as a target for Rho, and interact with some cytoskeletal component upon Rho binding or relay a Rho signal to other molecules. In Mus musculus (Mouse), this protein is Rhophilin-1 (Rhpn1).